Here is a 120-residue protein sequence, read N- to C-terminus: Flagellar protein FliT (120 aa).

Positions 1–50 are required for homodimerization; the sequence is MNDSSLSLKKWHALSALSNTMLSLAQSGKWDELIEQEVAYVSLVEKISIT. A fliD binding region spans residues 59-97; the sequence is IQDQAMVMLNNVLQNEMTLKTLLQERMDELHGLMAQTGK.

This sequence belongs to the FliT family. As to quaternary structure, homodimer. Interacts with FliD and FlhC.

It is found in the cytoplasm. It localises to the cytosol. Dual-function protein that regulates the transcription of class 2 flagellar operons and that also acts as an export chaperone for the filament-capping protein FliD. As a transcriptional regulator, acts as an anti-FlhDC factor; it directly binds FlhC, thus inhibiting the binding of the FlhC/FlhD complex to class 2 promoters, resulting in decreased expression of class 2 flagellar operons. As a chaperone, effects FliD transition to the membrane by preventing its premature polymerization, and by directing it to the export apparatus. This Enterobacter sp. (strain 638) protein is Flagellar protein FliT.